The primary structure comprises 189 residues: MFGSDDSGCHVMDDDVAPPANGSKAVTLLLRLITLALALTSAVLMATASECTIYGLDGATATTVTFKDYQPFIYLVGSNIAATILEVAAIYVQVGKGDDVEDAPMIPRVVLVVVDVAVQMLLYSATGAVFAAVMAYGPQISACTGAAGHFCEQVQRSKIISLAASLSAVLAAVAKDVALPCSVWPHPSS.

Topologically, residues 1–24 are cytoplasmic; it reads MFGSDDSGCHVMDDDVAPPANGSK. The chain crosses the membrane as a helical span at residues 25-45; it reads AVTLLLRLITLALALTSAVLM. Residues 46 to 71 are Extracellular-facing; the sequence is ATASECTIYGLDGATATTVTFKDYQP. Residues 72–92 traverse the membrane as a helical segment; that stretch reads FIYLVGSNIAATILEVAAIYV. Residues 93–109 are Cytoplasmic-facing; the sequence is QVGKGDDVEDAPMIPRV. A helical membrane pass occupies residues 110 to 130; that stretch reads VLVVVDVAVQMLLYSATGAVF. Residues 131–158 lie on the Extracellular side of the membrane; it reads AAVMAYGPQISACTGAAGHFCEQVQRSK. A helical transmembrane segment spans residues 159–179; the sequence is IISLAASLSAVLAAVAKDVAL. The Cytoplasmic segment spans residues 180 to 189; it reads PCSVWPHPSS.

Belongs to the Casparian strip membrane proteins (CASP) family. As to quaternary structure, homodimer and heterodimers.

Its subcellular location is the cell membrane. In Sorghum bicolor (Sorghum), this protein is CASP-like protein 1U2.